Reading from the N-terminus, the 238-residue chain is Endo-chitosanase (238 aa).

An N-terminal signal peptide occupies residues 1 to 17 (MRLSEILTVALVTGATA). N-linked (GlcNAc...) asparagine glycosylation occurs at Asn-83.

It belongs to the glycosyl hydrolase 75 family.

It localises to the secreted. It carries out the reaction Endohydrolysis of beta-(1-&gt;4)-linkages between D-glucosamine residues in a partly acetylated chitosan.. In terms of biological role, chitosanase catalyzing the endo-type cleavage of chitosan, the deacylated form of chitin. Chitosanase may be crucial in the degradation of the deacetylated portion of chitin in the fungal cell wall. Chitoolisaccharides produced by the hydrolysis of partially N-acetylated chitosan are known to have many biological activities, including antibacterial activity, immune-enhancing effects, and elicitor activity. The chitosans with higher degrees of deacetylation were shown to be the better substrates. Chitodimer, chitotrimer, and chitotetramer are the major products but monoacetyl chitodimer, monoacetyl chitotrimer, and monoacetyl chitotetramer are also produced. The polypeptide is Endo-chitosanase (csn) (Aspergillus fumigatus (Neosartorya fumigata)).